The primary structure comprises 619 residues: Dihydroxy-acid dehydratase (619 aa).

Asp-81 serves as a coordination point for Mg(2+). Cys-122 contacts [2Fe-2S] cluster. Mg(2+) contacts are provided by Asp-123 and Lys-124. The residue at position 124 (Lys-124) is an N6-carboxylysine. Position 195 (Cys-195) interacts with [2Fe-2S] cluster. Glu-492 serves as a coordination point for Mg(2+). The active-site Proton acceptor is the Ser-518.

It belongs to the IlvD/Edd family. Homodimer. Requires [2Fe-2S] cluster as cofactor. The cofactor is Mg(2+).

It catalyses the reaction (2R)-2,3-dihydroxy-3-methylbutanoate = 3-methyl-2-oxobutanoate + H2O. The enzyme catalyses (2R,3R)-2,3-dihydroxy-3-methylpentanoate = (S)-3-methyl-2-oxopentanoate + H2O. The protein operates within amino-acid biosynthesis; L-isoleucine biosynthesis; L-isoleucine from 2-oxobutanoate: step 3/4. It functions in the pathway amino-acid biosynthesis; L-valine biosynthesis; L-valine from pyruvate: step 3/4. Functionally, functions in the biosynthesis of branched-chain amino acids. Catalyzes the dehydration of (2R,3R)-2,3-dihydroxy-3-methylpentanoate (2,3-dihydroxy-3-methylvalerate) into 2-oxo-3-methylpentanoate (2-oxo-3-methylvalerate) and of (2R)-2,3-dihydroxy-3-methylbutanoate (2,3-dihydroxyisovalerate) into 2-oxo-3-methylbutanoate (2-oxoisovalerate), the penultimate precursor to L-isoleucine and L-valine, respectively. This Synechococcus elongatus (strain ATCC 33912 / PCC 7942 / FACHB-805) (Anacystis nidulans R2) protein is Dihydroxy-acid dehydratase.